The primary structure comprises 55 residues: Large ribosomal subunit protein bL33A (55 aa).

It belongs to the bacterial ribosomal protein bL33 family.

The chain is Large ribosomal subunit protein bL33A from Mycolicibacterium vanbaalenii (strain DSM 7251 / JCM 13017 / BCRC 16820 / KCTC 9966 / NRRL B-24157 / PYR-1) (Mycobacterium vanbaalenii).